A 488-amino-acid chain; its full sequence is MKKLTTIFIVFTLALLFVGNSTSANNGSVVEQNGQLSIQNGQLVNEHGDPVQLKGMSSHGLQWYGQFVNYDSIKWLRDDWGITVFRAAMYTSSGGYIEDPSVKEKVKEAVEAAIDLGIYVIIDWHILSDNDPNIYKEEAKEFFDEMSALYGDYPNVIYEIANEPNGHNVRWDSHIKPYAEEVIPVIRANDPNNIVIVGTATWSQDVHEAADNQLDDPNVMYAFHFYAGTHGQQLRNQVDYALSRGAAIFVSEWGTSAATGDGGVFLDEAQVWIDFMDERNLSWANWSLTHKDESSAALMPGANPTGGWTAAELSPSGAFVREKIRESASIPPSDPTPPSDPDPGEPDPTPPSDPGEYPAWDPNQIYTNEIVYHNGQLWQAKWWTQNQEPGANQYGPWEPLGDAPPSEPSDPPPPSEPEPDPGEPDPGEPDPGEPDPTPPSDPGEYPAWDPTQIYTNEIVYHNGQLWQAKWWTQNQEPGYPYGPWEPLN.

Residues H59, W63–Y64, Y90, and H125 each bind substrate. Catalysis depends on E163, which acts as the Proton donor. Y226 lines the substrate pocket. Residue E252 is the Nucleophile of the active site. Substrate-binding positions include A258–T259, W286, and K291–E293. 2 disordered regions span residues E326–P362 and E388–T451. 2 stretches are compositionally biased toward pro residues: residues P332–D353 and P405–E416. Acidic residues predominate over residues P417 to E433.

This sequence belongs to the glycosyl hydrolase 5 (cellulase A) family.

The enzyme catalyses Endohydrolysis of (1-&gt;4)-beta-D-glucosidic linkages in cellulose, lichenin and cereal beta-D-glucans.. The protein is Endoglucanase A (celA) of Evansella cellulosilytica (strain ATCC 21833 / DSM 2522 / FERM P-1141 / JCM 9156 / N-4) (Bacillus cellulosilyticus).